An 82-amino-acid polypeptide reads, in one-letter code: Exodeoxyribonuclease 7 small subunit (82 aa).

The protein belongs to the XseB family. In terms of assembly, heterooligomer composed of large and small subunits.

The protein resides in the cytoplasm. The catalysed reaction is Exonucleolytic cleavage in either 5'- to 3'- or 3'- to 5'-direction to yield nucleoside 5'-phosphates.. Functionally, bidirectionally degrades single-stranded DNA into large acid-insoluble oligonucleotides, which are then degraded further into small acid-soluble oligonucleotides. This is Exodeoxyribonuclease 7 small subunit from Colwellia psychrerythraea (strain 34H / ATCC BAA-681) (Vibrio psychroerythus).